We begin with the raw amino-acid sequence, 1728 residues long: Nebulin-related-anchoring protein (1728 aa).

In terms of domain architecture, LIM zinc-binding spans 4–64 (QACSRCGYGV…HAHNPKNNTF (61 aa)). Nebulin repeat units lie at residues 173–200 (TPAY…ERVS), 201–235 (TFTP…QQRG), 244–271 (TPAY…REMK), 313–340 (TPAY…KMKG), 345–379 (HSLA…NSKG), 386–414 (ETPQ…TQLR), 416–450 (HYDG…HDVV), 484–518 (KFSS…RNKL), 519–553 (NYTL…KTKG), 555–589 (GFEM…KMKG), 599–623 (LLHS…ESKT), 624–658 (HFNL…DYTV), 659–689 (LPED…WMRG), 699–721 (NLEQ…RVDE), 723–757 (KFTS…QSVH), 758–792 (QYTI…KQKA), 794–828 (GFEL…RSRG), 841–866 (QMSH…DTRS), 867–893 (QCHI…VGYR), 898–932 (CFTA…WMKG), 943–960 (VEQA…KYRQ), 966–1000 (KFTS…NVKH), 1001–1035 (HYTQ…RLRD), 1037–1071 (GYKL…RMKG), 1075–1109 (GSRS…HAKA), 1110–1136 (HFHL…QDYR), 1141–1175 (QHTV…FMRG), 1180–1203 (VPGT…KYRQ), 1209–1243 (KYTA…DARH), 1244–1278 (QYTM…NLRA), 1280–1314 (GYKL…KERG), 1318–1352 (GVRN…SSQA), 1353–1379 (QCHL…HDYR), 1384–1418 (EFTA…GMKG), 1425–1446 (QSPQ…KYRK), 1452–1478 (KFTT…RLYR), 1487–1521 (RYTP…QSRA), 1523–1557 (GYDF…RDRG), 1561–1595 (GYRS…KGRS), 1596–1630 (QFHS…QHTS), and 1637–1661 (LKHA…LTRG). Thr203 bears the Phosphothreonine mark. Ser1078 is subject to Phosphoserine.

In terms of assembly, interacts with actin, alpha-actinin, KLHL41, TLN1 and VCL. Interacts with CSRP3. Expressed in cardiac and skeletal muscle. Not detected in kidney, spleen, liver, brain, lung, stomach or uterus.

Functionally, may be involved in anchoring the terminal actin filaments in the myofibril to the membrane and in transmitting tension from the myofibrils to the extracellular matrix. This Mus musculus (Mouse) protein is Nebulin-related-anchoring protein.